Here is a 156-residue protein sequence, read N- to C-terminus: Arginine repressor (156 aa).

Belongs to the ArgR family.

The protein resides in the cytoplasm. It functions in the pathway amino-acid biosynthesis; L-arginine biosynthesis [regulation]. Functionally, regulates arginine biosynthesis genes. The chain is Arginine repressor from Vibrio campbellii (strain ATCC BAA-1116).